A 237-amino-acid polypeptide reads, in one-letter code: N-alpha-acetyltransferase 40 (237 aa).

Residue Gly-2 is the site of N-myristoyl glycine attachment. The 154-residue stretch at 63 to 216 (TALSPDTVEW…EDCSYEILSR (154 aa)) folds into the N-acetyltransferase domain. Residues Tyr-85, 127–129 (DVE), and Tyr-138 contribute to the substrate site. Acetyl-CoA is bound by residues 140–142 (VQL) and 148–153 (RKGLGK). Thr-174 is a substrate binding site. An acetyl-CoA-binding site is contributed by Asn-179. Residue Tyr-211 participates in substrate binding.

The protein belongs to the acetyltransferase family. NAA40 subfamily.

The protein resides in the cytoplasm. Its subcellular location is the nucleus. It carries out the reaction N-terminal L-seryl-[histone H4] + acetyl-CoA = N-terminal N(alpha)-acetyl-L-seryl-[histone H4] + CoA + H(+). The catalysed reaction is N-terminal L-seryl-[histone H2A] + acetyl-CoA = N-terminal N(alpha)-acetyl-L-seryl-[histone H2A] + CoA + H(+). Functionally, N-alpha-acetyltransferase that specifically mediates the acetylation of the N-terminal residues of histones H4 and H2A. In contrast to other N-alpha-acetyltransferase, has a very specific selectivity for histones H4 and H2A N-terminus and specifically recognizes the 'Ser-Gly-Arg-Gly sequence'. This chain is N-alpha-acetyltransferase 40 (naa40), found in Danio rerio (Zebrafish).